The chain runs to 434 residues: Enolase (434 aa).

Gln165 provides a ligand contact to (2R)-2-phosphoglycerate. The active-site Proton donor is Glu207. 3 residues coordinate Mg(2+): Asp244, Glu291, and Asp318. (2R)-2-phosphoglycerate contacts are provided by Lys343, Arg372, Ser373, and Lys394. Lys343 acts as the Proton acceptor in catalysis.

It belongs to the enolase family. Requires Mg(2+) as cofactor.

It is found in the cytoplasm. The protein resides in the secreted. The protein localises to the cell surface. It catalyses the reaction (2R)-2-phosphoglycerate = phosphoenolpyruvate + H2O. The protein operates within carbohydrate degradation; glycolysis; pyruvate from D-glyceraldehyde 3-phosphate: step 4/5. In terms of biological role, catalyzes the reversible conversion of 2-phosphoglycerate (2-PG) into phosphoenolpyruvate (PEP). It is essential for the degradation of carbohydrates via glycolysis. This is Enolase from Staphylococcus aureus (strain USA300 / TCH1516).